A 253-amino-acid chain; its full sequence is Phycoerythrobilin:ferredoxin oxidoreductase (253 aa).

The protein belongs to the HY2 family.

The catalysed reaction is (3Z)-phycoerythrobilin + oxidized 2[4Fe-4S]-[ferredoxin] = 15,16-dihydrobiliverdin + reduced 2[4Fe-4S]-[ferredoxin] + 2 H(+). Catalyzes the two-electron reduction of the C2 and C3(1) diene system of 15,16-dihydrobiliverdin. This Prochlorococcus marinus (strain AS9601) protein is Phycoerythrobilin:ferredoxin oxidoreductase.